The chain runs to 460 residues: 5-hydroxytryptamine receptor 2C (460 aa).

Residues 1 to 32 (MVNLGNAVRSLLMHLIGLLVWQFDISISPVAA) form the signal peptide. The Extracellular segment spans residues 33-56 (IVTDTFNSSDGGRLFQFPDGVQNW). A helical membrane pass occupies residues 57–81 (PALSIVVIIIMTIGGNILVIMAVSM). The Cytoplasmic portion of the chain corresponds to 82 to 87 (EKKLHN). Residues 88 to 112 (ATNYFLMSLAIADMLVGLLVMPLSL) traverse the membrane as a helical segment. The Extracellular portion of the chain corresponds to 113–129 (LAILYDYVWPLPRYLCP). Cysteine 128 and cysteine 208 are joined by a disulfide. Residues 130–152 (VWISLDVLFSTASIMHLCAISLD) form a helical membrane-spanning segment. Threonine 140 provides a ligand contact to ergotamine. Residues 152-154 (DRY) carry the DRY motif; important for ligand-induced conformation changes motif. The Cytoplasmic segment spans residues 153-168 (RYVAIRNPIEHSRFNS). Residues 169 to 190 (RTKAIMKIAIVWAISIGVSVPI) traverse the membrane as a helical segment. Topologically, residues 191 to 214 (PVIGLRDESKVFVNNTTCVLNDPN) are extracellular. Asparagine 204 and asparagine 205 each carry an N-linked (GlcNAc...) asparagine glycan. Leucine 210 is a binding site for ergotamine. A helical transmembrane segment spans residues 215 to 237 (FVLIGSFVAFFIPLTIMVITYFL). At 238–313 (TIYVLRRQTL…AINNEKKASK (76 aa)) the chain is on the cytoplasmic side. Residues 276–301 (EEENAPNPNPDQKPRRKKKEKRPRGT) are disordered. The span at 289 to 299 (PRRKKKEKRPR) shows a compositional bias: basic residues. Residues 314 to 338 (VLGIVFFVFLIMWCPFFITNILSVL) traverse the membrane as a helical segment. A disulfide bridge links cysteine 339 with cysteine 343. The Extracellular portion of the chain corresponds to 339–349 (CGKACNQKLME). Residues 350 to 372 (KLLNVFVWIGYVCSGINPLVYTL) form a helical membrane-spanning segment. An NPxxY motif; important for ligand-induced conformation changes and signaling motif is present at residues 366–370 (NPLVY). Topologically, residues 373–460 (FNKIYRRAFS…NVVSERISSV (88 aa)) are cytoplasmic. Positions 458–460 (SSV) match the PDZ-binding motif.

The protein belongs to the G-protein coupled receptor 1 family. As to quaternary structure, interacts with MPDZ. Interacts with ARRB2. Interacts with MPP3; this interaction stabilizes the receptor at the plasma membrane and prevents the desensitization of the HTR2C receptor-mediated calcium response.

The protein resides in the cell membrane. Its function is as follows. G-protein coupled receptor for 5-hydroxytryptamine (serotonin). Also functions as a receptor for various drugs and psychoactive substances, including ergot alkaloid derivatives, 1-2,5,-dimethoxy-4-iodophenyl-2-aminopropane (DOI) and lysergic acid diethylamide (LSD). Ligand binding causes a conformation change that triggers signaling via guanine nucleotide-binding proteins (G proteins) and modulates the activity of downstream effectors. HTR2C is coupled to G(q)/G(11) G alpha proteins and activates phospholipase C-beta, releasing diacylglycerol (DAG) and inositol 1,4,5-trisphosphate (IP3) second messengers that modulate the activity of phosphatidylinositol 3-kinase and promote the release of Ca(2+) ions from intracellular stores, respectively. Beta-arrestin family members inhibit signaling via G proteins and mediate activation of alternative signaling pathways. Regulates neuronal activity via the activation of short transient receptor potential calcium channels in the brain, and thereby modulates the activation of pro-opiomelanocortin neurons and the release of CRH that then regulates the release of corticosterone. Plays a role in the regulation of appetite and eating behavior, responses to anxiogenic stimuli and stress. Plays a role in insulin sensitivity and glucose homeostasis. The protein is 5-hydroxytryptamine receptor 2C of Rattus norvegicus (Rat).